A 235-amino-acid chain; its full sequence is uncharacterized protein (235 aa).

The protein to E.coli YbeR.

This is an uncharacterized protein from Escherichia coli (strain K12).